A 174-amino-acid chain; its full sequence is Protein-export protein SecB (174 aa).

The protein belongs to the SecB family. Homotetramer, a dimer of dimers. One homotetramer interacts with 1 SecA dimer.

It localises to the cytoplasm. Its function is as follows. One of the proteins required for the normal export of preproteins out of the cell cytoplasm. It is a molecular chaperone that binds to a subset of precursor proteins, maintaining them in a translocation-competent state. It also specifically binds to its receptor SecA. The protein is Protein-export protein SecB of Ehrlichia ruminantium (strain Gardel).